A 266-amino-acid polypeptide reads, in one-letter code: Interleukin-1 beta (266 aa).

Positions 1–113 are excised as a propeptide; it reads MATVPEPINE…ETSSDEFLCD (113 aa).

It belongs to the IL-1 family. In terms of assembly, monomer. In its precursor form, weakly interacts with full-length MEFV; the mature cytokine does not interact at all. Interacts with integrins ITGAV:ITGBV and ITGA5:ITGB1; integrin-binding is required for IL1B signaling. Interacts with cargo receptor TMED10; the interaction is direct and is required for the secretion of IL1B mature form. Interacts with HSP90AB1; the interaction facilitates cargo translocation into the ERGIC. Interacts with HSP90B1; the interaction facilitates cargo translocation into the ERGIC.

Its subcellular location is the cytoplasm. It is found in the cytosol. It localises to the secreted. The protein resides in the lysosome. The protein localises to the extracellular exosome. In terms of biological role, potent pro-inflammatory cytokine. Initially discovered as the major endogenous pyrogen, induces prostaglandin synthesis, neutrophil influx and activation, T-cell activation and cytokine production, B-cell activation and antibody production, and fibroblast proliferation and collagen production. Promotes Th17 differentiation of T-cells. Synergizes with IL12/interleukin-12 to induce IFNG synthesis from T-helper 1 (Th1) cells. Plays a role in angiogenesis by inducing VEGF production synergistically with TNF and IL6. Involved in transduction of inflammation downstream of pyroptosis: its mature form is specifically released in the extracellular milieu by passing through the gasdermin-D (GSDMD) pore. The protein is Interleukin-1 beta (IL1B) of Bubalus carabanensis (Swamp type water buffalo).